The primary structure comprises 187 residues: Phosphoheptose isomerase (187 aa).

An SIS domain is found at 34–187 (CIEALKNQKK…ILCSLIDESF (154 aa)). Residue 49-51 (NGG) coordinates substrate. Zn(2+)-binding residues include His-58 and Glu-62. Substrate contacts are provided by residues Glu-62, 91–92 (ND), 117–119 (STS), Ser-122, and Gln-169. 2 residues coordinate Zn(2+): Gln-169 and His-177.

The protein belongs to the SIS family. GmhA subfamily. Homotetramer. The cofactor is Zn(2+).

The protein resides in the cytoplasm. It carries out the reaction 2 D-sedoheptulose 7-phosphate = D-glycero-alpha-D-manno-heptose 7-phosphate + D-glycero-beta-D-manno-heptose 7-phosphate. Its pathway is carbohydrate biosynthesis; D-glycero-D-manno-heptose 7-phosphate biosynthesis; D-glycero-alpha-D-manno-heptose 7-phosphate and D-glycero-beta-D-manno-heptose 7-phosphate from sedoheptulose 7-phosphate: step 1/1. In terms of biological role, catalyzes the isomerization of sedoheptulose 7-phosphate in D-glycero-D-manno-heptose 7-phosphate. The polypeptide is Phosphoheptose isomerase (Nitratiruptor sp. (strain SB155-2)).